Reading from the N-terminus, the 89-residue chain is Small ribosomal subunit protein uS15 (89 aa).

Belongs to the universal ribosomal protein uS15 family. Part of the 30S ribosomal subunit. Forms a bridge to the 50S subunit in the 70S ribosome, contacting the 23S rRNA.

Its function is as follows. One of the primary rRNA binding proteins, it binds directly to 16S rRNA where it helps nucleate assembly of the platform of the 30S subunit by binding and bridging several RNA helices of the 16S rRNA. Forms an intersubunit bridge (bridge B4) with the 23S rRNA of the 50S subunit in the ribosome. This is Small ribosomal subunit protein uS15 from Bacteroides thetaiotaomicron (strain ATCC 29148 / DSM 2079 / JCM 5827 / CCUG 10774 / NCTC 10582 / VPI-5482 / E50).